We begin with the raw amino-acid sequence, 350 residues long: Probable poly-beta-1,6-N-acetyl-D-glucosamine export protein (350 aa).

10 helical membrane-spanning segments follow: residues 7-29 (ELVYLRAIICAIIIVTHLLTQIT), 44-66 (FYIRNIVIFGTPCFIILSQLLTT), 79-101 (TRVKYILIPYILMGLFYSYSESL), 116-138 (LLGQWYGYFIVVIMQFFILSYII), 145-167 (LFNSKILLLLSFILQQSFLYYFT), 187-204 (IIFGWIFYFFLGAYMGYN), 211-233 (FLERYLVIMIVLAVATYFVFIAL), 243-262 (SFSYSLTPYNSIMFIVILGI), 269-291 (MLFNTIQMISAFSFFIYLLHPII), and 306-328 (TMVFLAISLLFILGLCIGVGMIL).

The protein belongs to the acyltransferase 3 family.

Its subcellular location is the cell membrane. Its function is as follows. Presumably involved in the export of the biofilm adhesin polysaccharide poly-beta-1,6-N-acetyl-D-glucosamine (PNAG, also referred to as PIA) across the cell membrane. In Staphylococcus aureus (strain MRSA252), this protein is Probable poly-beta-1,6-N-acetyl-D-glucosamine export protein (icaC).